The primary structure comprises 146 residues: Holo-[acyl-carrier-protein] synthase (146 aa).

The Mg(2+) site is built by Asp9 and Glu63.

The protein belongs to the P-Pant transferase superfamily. AcpS family. The cofactor is Mg(2+).

It is found in the cytoplasm. It catalyses the reaction apo-[ACP] + CoA = holo-[ACP] + adenosine 3',5'-bisphosphate + H(+). Functionally, transfers the 4'-phosphopantetheine moiety from coenzyme A to a Ser of acyl-carrier-protein. The sequence is that of Holo-[acyl-carrier-protein] synthase from Burkholderia multivorans (strain ATCC 17616 / 249).